The chain runs to 152 residues: Acidic phospholipase A2 homolog textilotoxin D chain (152 aa).

The first 19 residues, 1–19 (MHPAHLLVLLGVCVSLLGA), serve as a signal peptide directing secretion. 7 disulfide bridges follow: C38-C104, C54-C151, C56-C72, C71-C132, C78-C125, C88-C118, and C111-C123. A glycan (N-linked (GlcNAc...) asparagine) is linked at N112.

It belongs to the phospholipase A2 family. Group I subfamily. D49 sub-subfamily. In terms of assembly, heterohexamer. 2 forms exist: 2 A or 2 B chains, 2 C chains and 2 covalently-linked D chains, and 1 A or 1 B, 1 C, 2 covalently-linked D chains and 2 differentially glycosylated covalently-linked D chains. Textilotoxin was originally described as pentameric. In terms of tissue distribution, expressed by the venom gland.

It is found in the secreted. Its function is as follows. Snake venom oligomeric phospholipase A2 that has potent presynaptic neurotoxicity. Chain D is not itself neurotoxic, but it is essential for the neurotoxicity of textilotoxin. Chain D possesses a very low phospholipase activity. The chain is Acidic phospholipase A2 homolog textilotoxin D chain from Pseudonaja textilis (Eastern brown snake).